Reading from the N-terminus, the 192-residue chain is MPSILERDQIAAVLVSASRDKTPAGLRDHAILQLLATYGLRSGEIRNMRIEDIDWRTETIRVRHSKTQAYTLLPLTEPVGEAILVYLRSGRPATDARELFVRTRAPYRKLDKLYSMVRRRLRDAGVKPRGKRGPHIFRHARATELLRAAVPQKIIGELLGHRSIASTAPYLKLATEDLRAIALDLPGTEVSA.

The Tyr recombinase domain occupies 1 to 183 (MPSILERDQI…ATEDLRAIAL (183 aa)). Residues Arg-41, Lys-66, His-135, Arg-138, and His-161 contribute to the active site. The O-(3'-phospho-DNA)-tyrosine intermediate role is filled by Tyr-170.

Belongs to the 'phage' integrase family.

This Sinorhizobium fredii (strain NBRC 101917 / NGR234) protein is Putative integrase/recombinase y4gC.